The following is a 315-amino-acid chain: 4-carboxy-2-hydroxymuconate-6-semialdehyde dehydrogenase (315 aa).

This sequence belongs to the Gfo/Idh/MocA family. In terms of assembly, homodimer.

It carries out the reaction 4-carboxy-2-hydroxymuconate semialdehyde hemiacetal + NADP(+) = 2-oxo-2H-pyran-4,6-dicarboxylate + NADPH + H(+). It functions in the pathway secondary metabolite metabolism; lignin degradation. Inhibited by p-chloromercuribenzoate (10 mM), HgCl2 (10 mM), or 5,5-dithiobis(2-nitrobenzoate) (100 mM). Functionally, involved in the degradation of protocatechuate (PCA) via the PCA 4,5-cleavage pathway. Catalyzes the oxidation of the hemiacetal form of 4-carboxy-2-hydroxymuconate-6-semialdehyde (CHMS) to produce 2-pyrone-4,6-dicarboxylate (PDC). LigC has 10-times-higher affinity to NADP than to NAD. This is 4-carboxy-2-hydroxymuconate-6-semialdehyde dehydrogenase (ligC) from Sphingobium sp. (strain NBRC 103272 / SYK-6).